A 176-amino-acid chain; its full sequence is Ribosome maturation factor RimM (176 aa).

In terms of domain architecture, PRC barrel spans 94 to 176 (KDEFFYFEIL…RFGFEILQNS (83 aa)).

Belongs to the RimM family. Binds ribosomal protein uS19.

The protein resides in the cytoplasm. In terms of biological role, an accessory protein needed during the final step in the assembly of 30S ribosomal subunit, possibly for assembly of the head region. Essential for efficient processing of 16S rRNA. May be needed both before and after RbfA during the maturation of 16S rRNA. It has affinity for free ribosomal 30S subunits but not for 70S ribosomes. This Campylobacter hominis (strain ATCC BAA-381 / DSM 21671 / CCUG 45161 / LMG 19568 / NCTC 13146 / CH001A) protein is Ribosome maturation factor RimM.